Reading from the N-terminus, the 518-residue chain is Chromosomal replication initiator protein DnaA (518 aa).

Residues 1–72 (MTLAEFWPLC…VREELAAGRS (72 aa)) are domain I, interacts with DnaA modulators. The segment at 72–180 (SAFVFKPGEG…DAEEARYEQT (109 aa)) is domain II. The disordered stretch occupies residues 145 to 172 (EPRQAAGSASRPESVAVAKARTDVQRDA). The segment at 181–397 (NLSPDYTFDT…GAFNRVGASS (217 aa)) is domain III, AAA+ region. ATP is bound by residues glycine 225, glycine 227, lysine 228, and threonine 229. The segment at 398 to 518 (RFMNRPVIDI…YEKLLILIQN (121 aa)) is domain IV, binds dsDNA.

It belongs to the DnaA family. As to quaternary structure, oligomerizes as a right-handed, spiral filament on DNA at oriC.

The protein localises to the cytoplasm. Functionally, plays an essential role in the initiation and regulation of chromosomal replication. ATP-DnaA binds to the origin of replication (oriC) to initiate formation of the DNA replication initiation complex once per cell cycle. Binds the DnaA box (a 9 base pair repeat at the origin) and separates the double-stranded (ds)DNA. Forms a right-handed helical filament on oriC DNA; dsDNA binds to the exterior of the filament while single-stranded (ss)DNA is stabiized in the filament's interior. The ATP-DnaA-oriC complex binds and stabilizes one strand of the AT-rich DNA unwinding element (DUE), permitting loading of DNA polymerase. After initiation quickly degrades to an ADP-DnaA complex that is not apt for DNA replication. Binds acidic phospholipids. This chain is Chromosomal replication initiator protein DnaA, found in Neisseria meningitidis serogroup B (strain ATCC BAA-335 / MC58).